A 243-amino-acid polypeptide reads, in one-letter code: Small ribosomal subunit protein uS2c (243 aa).

The disordered stretch occupies residues 224-243; sequence GNNGKVSSDQEDTQELQTVQ.

This sequence belongs to the universal ribosomal protein uS2 family.

It localises to the plastid. The protein localises to the chloroplast. The polypeptide is Small ribosomal subunit protein uS2c (rps2) (Rhodomonas salina (Cryptomonas salina)).